The chain runs to 1018 residues: Cytadherence high molecular weight protein 1 (1018 aa).

2 coiled-coil regions span residues 782-815 (NRFL…AKDL) and 849-880 (ELVR…AVYK).

Post-translationally, phosphorylated mainly on serine residues.

The protein localises to the cell projection. It is found in the attachment organelle membrane. In terms of biological role, component of the cytoskeleton-like structure which stabilizes the shape of the wall-less Mycoplasma. This cytoskeleton-like network of accessory proteins containing HMW proteins 1 to 5 allows the proper anchoring of cytadhesin proteins in the mycoplasmal membrane at the attachment organelle. The protein is Cytadherence high molecular weight protein 1 (hmw1) of Mycoplasma pneumoniae (strain ATCC 29342 / M129 / Subtype 1) (Mycoplasmoides pneumoniae).